The sequence spans 702 residues: Polyribonucleotide nucleotidyltransferase (702 aa).

Mg(2+) contacts are provided by Asp-487 and Asp-493. A KH domain is found at 554 to 613 (PRLLTIKIHPDKIREVIGKGGSTIQAITKETGTQIDIQDDGTIVIASVNAIAAQAAKARI). The S1 motif domain occupies 623 to 691 (GRIYEGKVAK…KQGRIRLSMK (69 aa)).

It belongs to the polyribonucleotide nucleotidyltransferase family. In terms of assembly, component of the RNA degradosome, which is a multiprotein complex involved in RNA processing and mRNA degradation. Mg(2+) is required as a cofactor.

Its subcellular location is the cytoplasm. The enzyme catalyses RNA(n+1) + phosphate = RNA(n) + a ribonucleoside 5'-diphosphate. Its function is as follows. Involved in mRNA degradation. Catalyzes the phosphorolysis of single-stranded polyribonucleotides processively in the 3'- to 5'-direction. The polypeptide is Polyribonucleotide nucleotidyltransferase (Stenotrophomonas maltophilia (strain R551-3)).